The chain runs to 296 residues: 4-hydroxy-tetrahydrodipicolinate synthase (296 aa).

Residue Thr47 coordinates pyruvate. Catalysis depends on Tyr136, which acts as the Proton donor/acceptor. The active-site Schiff-base intermediate with substrate is the Lys164. Val206 provides a ligand contact to pyruvate.

It belongs to the DapA family. Homotetramer; dimer of dimers.

It is found in the cytoplasm. It catalyses the reaction L-aspartate 4-semialdehyde + pyruvate = (2S,4S)-4-hydroxy-2,3,4,5-tetrahydrodipicolinate + H2O + H(+). Its pathway is amino-acid biosynthesis; L-lysine biosynthesis via DAP pathway; (S)-tetrahydrodipicolinate from L-aspartate: step 3/4. Functionally, catalyzes the condensation of (S)-aspartate-beta-semialdehyde [(S)-ASA] and pyruvate to 4-hydroxy-tetrahydrodipicolinate (HTPA). This is 4-hydroxy-tetrahydrodipicolinate synthase from Thermosynechococcus vestitus (strain NIES-2133 / IAM M-273 / BP-1).